The sequence spans 395 residues: Acetate kinase 1 (395 aa).

Mg(2+) is bound at residue Asn-8. Lys-15 contributes to the ATP binding site. Arg-89 is a binding site for substrate. Asp-146 acts as the Proton donor/acceptor in catalysis. ATP contacts are provided by residues 206–210 (HIGNG), 283–285 (DMR), and 330–334 (GIGEN). Glu-382 lines the Mg(2+) pocket.

Belongs to the acetokinase family. As to quaternary structure, homodimer. Mg(2+) serves as cofactor. The cofactor is Mn(2+).

It localises to the cytoplasm. It carries out the reaction acetate + ATP = acetyl phosphate + ADP. It functions in the pathway metabolic intermediate biosynthesis; acetyl-CoA biosynthesis; acetyl-CoA from acetate: step 1/2. Functionally, catalyzes the formation of acetyl phosphate from acetate and ATP. Can also catalyze the reverse reaction. In Lactococcus lactis subsp. lactis (strain IL1403) (Streptococcus lactis), this protein is Acetate kinase 1.